The primary structure comprises 281 residues: Pantothenate synthetase (281 aa).

30 to 37 (MGYLHEGH) is an ATP binding site. H37 serves as the catalytic Proton donor. Q61 serves as a coordination point for (R)-pantoate. Q61 contributes to the beta-alanine binding site. 147 to 150 (GEKD) is an ATP binding site. Q153 contributes to the (R)-pantoate binding site. Residues I176 and 184 to 187 (KSSR) contribute to the ATP site.

The protein belongs to the pantothenate synthetase family. In terms of assembly, homodimer.

It is found in the cytoplasm. It carries out the reaction (R)-pantoate + beta-alanine + ATP = (R)-pantothenate + AMP + diphosphate + H(+). The protein operates within cofactor biosynthesis; (R)-pantothenate biosynthesis; (R)-pantothenate from (R)-pantoate and beta-alanine: step 1/1. Its function is as follows. Catalyzes the condensation of pantoate with beta-alanine in an ATP-dependent reaction via a pantoyl-adenylate intermediate. In Clostridium botulinum (strain Langeland / NCTC 10281 / Type F), this protein is Pantothenate synthetase.